The sequence spans 620 residues: Ferric/cupric reductase transmembrane component 7 (620 aa).

Residues 1–45 (MIEERDLVLSNGIHCIADIHSELYARLKKESQAATPWVYQKQYGK) are Extracellular-facing. The chain crosses the membrane as a helical span at residues 46-66 (FVTYFVAVIIFLSLIKKLAFM). Residues 67–107 (YYDSSEEFLPEKKNSPTTPSVFLARIMTKLVAFNRYICYRK) lie on the Cytoplasmic side of the membrane. Residues 108 to 128 (FPTLIFSYLGIPTSVGTFLVV) traverse the membrane as a helical segment. At 129–167 (MATTLYTLLYCFVPHPFYRPCAGFGSPPLSVRAGIMAIS) the chain is on the extracellular side. Positions 161-320 (AGIMAISLVP…LAVKGYLRPG (160 aa)) constitute a Ferric oxidoreductase domain. A helical membrane pass occupies residues 168-188 (LVPFVFSLSGKINVIGWLVGL). Residues 189 to 194 (SYEKIN) lie on the Cytoplasmic side of the membrane. A helical transmembrane segment spans residues 195–215 (IYHQWASILCLFFSWVHVIPF). Heme contacts are provided by histidine 197 and histidine 211. Topologically, residues 216 to 237 (LRQARHEGGYERMHQRWKASDM) are extracellular. A helical membrane pass occupies residues 238 to 258 (WRSGVPPILFLNLLWLSSLPI). Over 259-265 (ARRHFYE) the chain is Cytoplasmic. A helical transmembrane segment spans residues 266 to 286 (IFLQLHWILAVGFYISLFYHV). Residues histidine 271 and histidine 285 each coordinate heme. Topologically, residues 287–292 (YPELNS) are extracellular. Residues 293–313 (HMYLVATIVVWFAQLFYRLAV) traverse the membrane as a helical segment. Residues 314–620 (KGYLRPGRSF…CYLHSESFGY (307 aa)) lie on the Cytoplasmic side of the membrane. The FAD-binding FR-type domain maps to 321–419 (RSFMASTIAN…DGPYGGIERD (99 aa)). 369 to 375 (HPFSIFP) contributes to the FAD binding site. 411–414 (GPYG) is an NADP(+) binding site. Residues 519 to 543 (SDQSDLAKREKDTEFGQDDTESNST) form a disordered region. Residues 523–532 (DLAKREKDTE) are compositionally biased toward basic and acidic residues. 578-579 (CF) serves as a coordination point for NADP(+).

Belongs to the ferric reductase (FRE) family. FAD serves as cofactor.

It is found in the cell membrane. The enzyme catalyses 2 a Fe(II)-siderophore + NADP(+) + H(+) = 2 a Fe(III)-siderophore + NADPH. In terms of biological role, cell surface metalloreductase. May be involved in copper homeostasis. This chain is Ferric/cupric reductase transmembrane component 7 (FRE7), found in Saccharomyces cerevisiae (strain ATCC 204508 / S288c) (Baker's yeast).